Reading from the N-terminus, the 115-residue chain is Prefoldin subunit beta (115 aa).

It belongs to the prefoldin subunit beta family. Heterohexamer of two alpha and four beta subunits.

The protein resides in the cytoplasm. In terms of biological role, molecular chaperone capable of stabilizing a range of proteins. Seems to fulfill an ATP-independent, HSP70-like function in archaeal de novo protein folding. This chain is Prefoldin subunit beta, found in Methanococcus aeolicus (strain ATCC BAA-1280 / DSM 17508 / OCM 812 / Nankai-3).